A 386-amino-acid polypeptide reads, in one-letter code: Putative 8-amino-7-oxononanoate synthase (386 aa).

Position 22 (R22) interacts with substrate. Position 109–110 (109–110 (GY)) interacts with pyridoxal 5'-phosphate. H134 is a substrate binding site. Residues S182, 207–210 (DEAH), and 238–241 (TLSK) each bind pyridoxal 5'-phosphate. K241 carries the N6-(pyridoxal phosphate)lysine modification. Residue T356 participates in substrate binding.

Belongs to the class-II pyridoxal-phosphate-dependent aminotransferase family. BioF subfamily. In terms of assembly, homodimer. It depends on pyridoxal 5'-phosphate as a cofactor.

It carries out the reaction 6-carboxyhexanoyl-[ACP] + L-alanine + H(+) = (8S)-8-amino-7-oxononanoate + holo-[ACP] + CO2. Its pathway is cofactor biosynthesis; biotin biosynthesis. Its function is as follows. Catalyzes the decarboxylative condensation of pimeloyl-[acyl-carrier protein] and L-alanine to produce 8-amino-7-oxononanoate (AON), [acyl-carrier protein], and carbon dioxide. The chain is Putative 8-amino-7-oxononanoate synthase (bioF) from Trichormus variabilis (strain ATCC 29413 / PCC 7937) (Anabaena variabilis).